We begin with the raw amino-acid sequence, 525 residues long: Cytochrome P450 monooxygenase tpcC (525 aa).

A helical transmembrane segment spans residues 13-33; it reads LPVTLVSLLVGSIFYFCYLTV. Cysteine 457 serves as a coordination point for heme.

Belongs to the cytochrome P450 family. It depends on heme as a cofactor.

The protein resides in the membrane. It participates in secondary metabolite biosynthesis; terpenoid biosynthesis. In terms of biological role, cytochrome P450 monooxygenase; part of the gene cluster that mediates the biosynthesis of terpestacin. The bifunctional terpene synthase tpcA converts isopentenyl diphosphate (IPP) and dimethylallyl diphosphate (DMAPP) into the sesterterpene preterpestacin I. The C-terminal prenyltransferase (PT) domain of tpcA catalyzes formation of GFPP, whereas the N-terminal terpene cyclase (TC) domain catalyzes the cyclization of GFPP into preterpestacin I. The cytochrome P450 monooxygenase tpcB then hydroxylates preterpestacin I to yield 24-hydroxypreterpstacin I (renamed as preterpestacin II) whereas the cytochrome P450 monooxygenase tpcC further hydroxylates preterpestacin II to yield 16,17-dihydroxypreterpestacin II (renamed as preterpestacin III). Finally, the FAD-dependent monooxygenase tpcD converts preterpestacin III into terpestacin. This is Cytochrome P450 monooxygenase tpcC from Cochliobolus heterostrophus (strain C5 / ATCC 48332 / race O) (Southern corn leaf blight fungus).